The sequence spans 149 residues: MQVILMDKVVNLGNLGDVVKVKDGYARNFLIPTGRARRATQANMEAFAAQKAELERIAADKLADAQRRSEKLEGASVTISQKAGVDGRLFGSITNADIAEALQAQGHDVAKADVRLPDGPLKALGEYPVVLSLHSDVSANITVVVVGEQ.

Belongs to the bacterial ribosomal protein bL9 family.

Functionally, binds to the 23S rRNA. This is Large ribosomal subunit protein bL9 from Thiobacillus denitrificans (strain ATCC 25259 / T1).